The sequence spans 329 residues: Diaminopimelate epimerase (329 aa).

Asn14 and Asn73 together coordinate substrate. The active-site Proton donor is the Cys82. Substrate-binding positions include 83-84, Asn170, Asn206, and 224-225; these read GN and ER. The active-site Proton acceptor is Cys233. 234-235 serves as a coordination point for substrate; sequence GT.

The protein belongs to the diaminopimelate epimerase family. As to quaternary structure, homodimer.

The protein localises to the cytoplasm. It carries out the reaction (2S,6S)-2,6-diaminopimelate = meso-2,6-diaminopimelate. Its pathway is amino-acid biosynthesis; L-lysine biosynthesis via DAP pathway; DL-2,6-diaminopimelate from LL-2,6-diaminopimelate: step 1/1. Catalyzes the stereoinversion of LL-2,6-diaminopimelate (L,L-DAP) to meso-diaminopimelate (meso-DAP), a precursor of L-lysine and an essential component of the bacterial peptidoglycan. The protein is Diaminopimelate epimerase of Listeria monocytogenes serotype 4b (strain F2365).